Reading from the N-terminus, the 530-residue chain is ATP synthase subunit alpha (530 aa).

ATP is bound at residue 169-176 (GDRQTGKT).

It belongs to the ATPase alpha/beta chains family. As to quaternary structure, F-type ATPases have 2 components, CF(1) - the catalytic core - and CF(0) - the membrane proton channel. CF(1) has five subunits: alpha(3), beta(3), gamma(1), delta(1), epsilon(1). CF(0) has three main subunits: a(1), b(2) and c(9-12). The alpha and beta chains form an alternating ring which encloses part of the gamma chain. CF(1) is attached to CF(0) by a central stalk formed by the gamma and epsilon chains, while a peripheral stalk is formed by the delta and b chains.

It is found in the cell membrane. It carries out the reaction ATP + H2O + 4 H(+)(in) = ADP + phosphate + 5 H(+)(out). In terms of biological role, produces ATP from ADP in the presence of a proton gradient across the membrane. The alpha chain is a regulatory subunit. This chain is ATP synthase subunit alpha, found in Mycoplasmopsis synoviae (strain 53) (Mycoplasma synoviae).